The chain runs to 40 residues: Ribosome-inactivating protein saporin-1 (40 aa).

Belongs to the ribosome-inactivating protein family. Type 1 RIP subfamily.

The enzyme catalyses Endohydrolysis of the N-glycosidic bond at one specific adenosine on the 28S rRNA.. Functionally, ribosome-inactivating protein of type 1, inhibits protein synthesis in animal cells. The chain is Ribosome-inactivating protein saporin-1 (SAP1) from Saponaria officinalis (Common soapwort).